Consider the following 199-residue polypeptide: NAD(P)H dehydrogenase (quinone) (199 aa).

Residues 4-190 (MLVLYYSAYG…DDARFQGRRV (187 aa)) enclose the Flavodoxin-like domain. FMN is bound by residues 10-15 (SAYGHM) and 78-80 (TRY). Tyr-12 contacts NAD(+). Trp-98 is a binding site for substrate. Residues 113-119 (STATQHG) and His-134 contribute to the FMN site. The segment at 158 to 181 (GAPYGMTTTADGDGSRQPSAQELD) is disordered. Over residues 163 to 177 (MTTTADGDGSRQPSA) the composition is skewed to polar residues.

The protein belongs to the WrbA family. The cofactor is FMN.

It catalyses the reaction a quinone + NADH + H(+) = a quinol + NAD(+). It carries out the reaction a quinone + NADPH + H(+) = a quinol + NADP(+). This is NAD(P)H dehydrogenase (quinone) from Brucella ovis (strain ATCC 25840 / 63/290 / NCTC 10512).